The chain runs to 413 residues: Phosphoglycerate kinase (413 aa).

Residues 24–26 (DFN), arginine 39, 62–65 (HLSR), arginine 123, and arginine 165 each bind substrate. ATP contacts are provided by residues lysine 216, glutamate 343, and 369-372 (GGDS).

This sequence belongs to the phosphoglycerate kinase family. In terms of assembly, monomer.

It is found in the cytoplasm. It catalyses the reaction (2R)-3-phosphoglycerate + ATP = (2R)-3-phospho-glyceroyl phosphate + ADP. The protein operates within carbohydrate degradation; glycolysis; pyruvate from D-glyceraldehyde 3-phosphate: step 2/5. This chain is Phosphoglycerate kinase, found in Mycoplasmoides gallisepticum (strain R(low / passage 15 / clone 2)) (Mycoplasma gallisepticum).